Consider the following 597-residue polypeptide: Blastula protease 10 (597 aa).

An N-terminal signal peptide occupies residues 1–16 (MKLILFLSGLVSLVLC). The propeptide at 17–93 (TLAAPTGDQK…DEMTGRKKRK (77 aa)) is activation peptide. The tract at residues 24–67 (DQKEIHTETPPPKKPSETTTPGALKTPQPEPKDEEPTPGAFQGD) is disordered. The region spanning 93–294 (KATIYESQRW…ELANLIYECD (202 aa)) is the Peptidase M12A domain. Intrachain disulfides connect cysteine 134/cysteine 293, cysteine 162/cysteine 182, cysteine 299/cysteine 315, cysteine 305/cysteine 317, cysteine 319/cysteine 328, cysteine 339/cysteine 365, cysteine 392/cysteine 412, cysteine 484/cysteine 510, and cysteine 537/cysteine 557. A Zn(2+)-binding site is contributed by histidine 190. Residue glutamate 191 is part of the active site. 2 residues coordinate Zn(2+): histidine 194 and histidine 200. The 35-residue stretch at 295 to 329 (DIEDCAGANECLNGGYHDTECNCVCPSGYNGDLCE) folds into the EGF-like domain. CUB domains follow at residues 339–449 (CSER…YRIV) and 484–595 (CGGS…YRAI).

The cofactor is Zn(2+).

The protein resides in the cytoplasm. The protein localises to the perinuclear region. Its subcellular location is the cell cortex. It is found in the secreted. It localises to the extracellular space. Its function is as follows. Could be involved in the differentiation of ectodermal lineages and subsequent patterning of the embryo. The sequence is that of Blastula protease 10 (BP10) from Paracentrotus lividus (Common sea urchin).